The primary structure comprises 278 residues: Putative pyruvate, phosphate dikinase regulatory protein (278 aa).

ADP is bound at residue 149-156 (GVSRSSKT).

This sequence belongs to the pyruvate, phosphate/water dikinase regulatory protein family. PDRP subfamily.

It catalyses the reaction N(tele)-phospho-L-histidyl/L-threonyl-[pyruvate, phosphate dikinase] + ADP = N(tele)-phospho-L-histidyl/O-phospho-L-threonyl-[pyruvate, phosphate dikinase] + AMP + H(+). The enzyme catalyses N(tele)-phospho-L-histidyl/O-phospho-L-threonyl-[pyruvate, phosphate dikinase] + phosphate + H(+) = N(tele)-phospho-L-histidyl/L-threonyl-[pyruvate, phosphate dikinase] + diphosphate. Its function is as follows. Bifunctional serine/threonine kinase and phosphorylase involved in the regulation of the pyruvate, phosphate dikinase (PPDK) by catalyzing its phosphorylation/dephosphorylation. The polypeptide is Putative pyruvate, phosphate dikinase regulatory protein (Erythrobacter litoralis (strain HTCC2594)).